The sequence spans 371 residues: Ferredoxin--NADP reductase, apicoplast (371 aa).

An apicoplast-targeting transit peptide spans 1-18; the sequence is MKIRFVFILSVLISGVCC. FAD contacts are provided by residues lysine 68, 155 to 159, 172 to 179, 192 to 194, and threonine 235; these read ARLYS, AIKIHKYE, and YCS. Residues 68-218 form the FAD-binding FR-type domain; it reads KNPLKCKIVD…TGAHGYFNLP (151 aa). NADP(+) is bound at residue lysine 174. NADP(+)-binding positions include 272-273, serine 302, 313-315, and 341-343; these read VY, YVQ, and HKS. Residues lysine 342 and tyrosine 371 each coordinate FAD.

It belongs to the ferredoxin--NADP reductase type 1 family. In terms of assembly, monomer. Homodimer; disulfide linked. NADP binding accelerates formation of an inactive, disulfide-linked homodimer when the protein is exposed to air for 24 hours or more (in vitro); the physiological relevance of this is uncertain. Requires FAD as cofactor.

It localises to the plastid. The protein localises to the apicoplast. The catalysed reaction is 2 reduced [2Fe-2S]-[ferredoxin] + NADP(+) + H(+) = 2 oxidized [2Fe-2S]-[ferredoxin] + NADPH. Its function is as follows. May play a role in the terminal step of the DOXP/MEP pathway for isoprenoid precursor biosynthesis. The sequence is that of Ferredoxin--NADP reductase, apicoplast from Plasmodium falciparum (isolate 3D7).